Here is a 210-residue protein sequence, read N- to C-terminus: Pyridoxine/pyridoxamine 5'-phosphate oxidase (210 aa).

Substrate-binding positions include 7-10 (REDY) and K65. Residues 60 to 65 (RMVLLK), 75 to 76 (FT), R81, K82, and Q104 contribute to the FMN site. The substrate site is built by Y122, R126, and S130. FMN-binding positions include 139–140 (QS) and W183. 189–191 (RLH) is a substrate binding site. An FMN-binding site is contributed by R193.

The protein belongs to the pyridoxamine 5'-phosphate oxidase family. In terms of assembly, homodimer. Requires FMN as cofactor.

The enzyme catalyses pyridoxamine 5'-phosphate + O2 + H2O = pyridoxal 5'-phosphate + H2O2 + NH4(+). It carries out the reaction pyridoxine 5'-phosphate + O2 = pyridoxal 5'-phosphate + H2O2. Its pathway is cofactor metabolism; pyridoxal 5'-phosphate salvage; pyridoxal 5'-phosphate from pyridoxamine 5'-phosphate: step 1/1. It functions in the pathway cofactor metabolism; pyridoxal 5'-phosphate salvage; pyridoxal 5'-phosphate from pyridoxine 5'-phosphate: step 1/1. Functionally, catalyzes the oxidation of either pyridoxine 5'-phosphate (PNP) or pyridoxamine 5'-phosphate (PMP) into pyridoxal 5'-phosphate (PLP). The chain is Pyridoxine/pyridoxamine 5'-phosphate oxidase from Neisseria gonorrhoeae (strain ATCC 700825 / FA 1090).